Consider the following 314-residue polypeptide: Aryldialkylphosphatase (314 aa).

Fe cation-binding residues include histidine 22, histidine 24, and lysine 137. 3 residues coordinate Co(2+): lysine 137, histidine 170, and histidine 199. Lysine 137 carries the post-translational modification N6-carboxylysine. Aspartate 256 is a Fe cation binding site.

It belongs to the metallo-dependent hydrolases superfamily. Phosphotriesterase family. Homodimer. The cofactor is Co(2+). Fe cation is required as a cofactor.

The catalysed reaction is An aryl dialkyl phosphate + H2O = dialkyl phosphate + an aryl alcohol.. Its activity is regulated as follows. Inactivated by EDTA and o-phenanthroline. Has a low paraoxonase activity. Also active, but with a lower activity, against other organo-phosphorus insecticides such as Dursban, Coumaphos, pNP-butanoate or parathion. The sequence is that of Aryldialkylphosphatase (php) from Saccharolobus solfataricus (strain ATCC 35092 / DSM 1617 / JCM 11322 / P2) (Sulfolobus solfataricus).